Here is a 345-residue protein sequence, read N- to C-terminus: Proto-oncogene serine/threonine-protein kinase mos (345 aa).

One can recognise a Protein kinase domain in the interval 63-344 (VCLLQRLGAG…LDLRALQAEL (282 aa)). Residues 69-77 (LGAGGFGSV) and K90 each bind ATP. The Proton acceptor role is filled by D202.

The protein belongs to the protein kinase superfamily. Ser/Thr protein kinase family. As to quaternary structure, interacts with MAP2K1/MEK1. In terms of tissue distribution, restricted to gonadal tissues.

It is found in the cytoplasm. It carries out the reaction L-seryl-[protein] + ATP = O-phospho-L-seryl-[protein] + ADP + H(+). It catalyses the reaction L-threonyl-[protein] + ATP = O-phospho-L-threonyl-[protein] + ADP + H(+). In terms of biological role, serine/threonine kinase involved in the regulation of MAPK signaling. Is an activator of the ERK1/2 signaling cascade playing an essential role in the stimulation of oocyte maturation. The sequence is that of Proto-oncogene serine/threonine-protein kinase mos from Sus scrofa (Pig).